We begin with the raw amino-acid sequence, 123 residues long: Histone H2B (123 aa).

A disordered region spans residues 1 to 32; it reads MPPKAASKGAKKAASKAKAARSTDKKKRRRRR. Over residues 9–32 the composition is skewed to basic residues; that stretch reads GAKKAASKAKAARSTDKKKRRRRR. Serine 110 carries an O-linked (GlcNAc) serine glycan. Residue lysine 118 forms a Glycyl lysine isopeptide (Lys-Gly) (interchain with G-Cter in ubiquitin) linkage.

This sequence belongs to the histone H2B family. The nucleosome is a histone octamer containing two molecules each of H2A, H2B, H3 and H4 assembled in one H3-H4 heterotetramer and two H2A-H2B heterodimers. The octamer wraps approximately 147 bp of DNA. Post-translationally, monoubiquitination of Lys-118 gives a specific tag for epigenetic transcriptional activation and is also prerequisite for histone H3 'Lys-4' and 'Lys-79' methylation.

Its subcellular location is the nucleus. The protein resides in the chromosome. Its function is as follows. Core component of nucleosome. Nucleosomes wrap and compact DNA into chromatin, limiting DNA accessibility to the cellular machineries which require DNA as a template. Histones thereby play a central role in transcription regulation, DNA repair, DNA replication and chromosomal stability. DNA accessibility is regulated via a complex set of post-translational modifications of histones, also called histone code, and nucleosome remodeling. This chain is Histone H2B, found in Urechis caupo (Innkeeper worm).